The chain runs to 230 residues: Response regulator MprA (230 aa).

Residues 4–118 (RILVVDDDRA…ELLARMRALL (115 aa)) enclose the Response regulatory domain. Aspartate 48 is subject to 4-aspartylphosphate. The segment at residues 129-227 (SPALTFLDLT…VRGVGYVLRE (99 aa)) is a DNA-binding region (ompR/PhoB-type).

In terms of processing, phosphorylated and dephosphorylated by MprB.

It is found in the cytoplasm. In terms of biological role, member of the two-component regulatory system MprB/MprA which contributes to maintaining a balance among several systems involved in stress resistance and is required for establishment and maintenance of persistent infection in the host. Functions as a transcriptional regulator that recognizes a 19-bp nucleotide motif comprizing two loosely conserved 8-bp direct DNA-binding motif repeats separated by a 3-bp spacer region. The sequence is that of Response regulator MprA (mprA) from Mycobacterium sp. (strain JLS).